Here is a 99-residue protein sequence, read N- to C-terminus: MKFSQNILRHELVGLNLEIVNSTDKRLISTKGRVINETRNMLVIEKNNGKEITVPKEISIFRFEFSDLDTPKKVDIDGRLLIGRPEDRLKRKIKQLYPY.

The protein belongs to the eukaryotic/archaeal RNase P protein component 1 family. In terms of assembly, consists of a catalytic RNA component and at least 4-5 protein subunits.

It is found in the cytoplasm. The catalysed reaction is Endonucleolytic cleavage of RNA, removing 5'-extranucleotides from tRNA precursor.. Part of ribonuclease P, a protein complex that generates mature tRNA molecules by cleaving their 5'-ends. The chain is Ribonuclease P protein component 1 from Methanococcus vannielii.